The following is a 312-amino-acid chain: Glycerol-3-phosphate phosphatase (312 aa).

Catalysis depends on Asp30, which acts as the Nucleophile. Mg(2+) contacts are provided by Asp30, Asp32, and Asp251. Asp32 acts as the Proton donor in catalysis.

It belongs to the HAD-like hydrolase superfamily. CbbY/CbbZ/Gph/YieH family. Homodimer. Mg(2+) is required as a cofactor.

It catalyses the reaction O-phospho-L-tyrosyl-[protein] + H2O = L-tyrosyl-[protein] + phosphate. It carries out the reaction sn-glycerol 1-phosphate + H2O = glycerol + phosphate. The catalysed reaction is sn-glycerol 3-phosphate + H2O = glycerol + phosphate. Functionally, glycerol-3-phosphate phosphatase hydrolyzing glycerol-3-phosphate into glycerol. Thereby, regulates the cellular levels of glycerol-3-phosphate a metabolic intermediate of glucose, lipid and energy metabolism. Was also shown to have a 2-phosphoglycolate phosphatase activity and a tyrosine-protein phosphatase activity. However, their physiological relevance is unclear. In vitro, also has a phosphatase activity toward ADP, ATP, GDP and GTP. The polypeptide is Glycerol-3-phosphate phosphatase (Gallus gallus (Chicken)).